We begin with the raw amino-acid sequence, 394 residues long: Elongation factor Tu (394 aa).

The region spanning 10–204 is the tr-type G domain; it reads KPHVNVGTIG…ALDSYIPEPE (195 aa). The G1 stretch occupies residues 19-26; that stretch reads GHVDHGKT. Position 19 to 26 (19 to 26) interacts with GTP; the sequence is GHVDHGKT. Residue Thr26 coordinates Mg(2+). Residues 60 to 64 form a G2 region; the sequence is GITIS. Positions 81-84 are G3; it reads DCPG. GTP-binding positions include 81-85 and 136-139; these read DCPGH and NKCD. The G4 stretch occupies residues 136–139; that stretch reads NKCD. Residues 174–176 form a G5 region; it reads SAL.

Belongs to the TRAFAC class translation factor GTPase superfamily. Classic translation factor GTPase family. EF-Tu/EF-1A subfamily. Monomer.

It localises to the cytoplasm. The catalysed reaction is GTP + H2O = GDP + phosphate + H(+). Functionally, GTP hydrolase that promotes the GTP-dependent binding of aminoacyl-tRNA to the A-site of ribosomes during protein biosynthesis. The chain is Elongation factor Tu from Alteromonas mediterranea (strain DSM 17117 / CIP 110805 / LMG 28347 / Deep ecotype).